The chain runs to 211 residues: Thymidylate kinase (211 aa).

11 to 18 (GPDGAGKT) is an ATP binding site.

The protein belongs to the thymidylate kinase family.

The enzyme catalyses dTMP + ATP = dTDP + ADP. In terms of biological role, phosphorylation of dTMP to form dTDP in both de novo and salvage pathways of dTTP synthesis. This Streptococcus pyogenes serotype M6 (strain ATCC BAA-946 / MGAS10394) protein is Thymidylate kinase.